The sequence spans 177 residues: Cytochrome c oxidase assembly protein CtaG (177 aa).

Over 1–8 (MTQKAKNT) the chain is Cytoplasmic. The chain crosses the membrane as a helical; Signal-anchor for type II membrane protein span at residues 9–29 (IYLLILIILSMLCLVYASVPL). The Periplasmic portion of the chain corresponds to 30 to 177 (YSIFCKVTGY…TFFKYKETTK (148 aa)).

The protein belongs to the COX11/CtaG family.

Its subcellular location is the cell inner membrane. Functionally, exerts its effect at some terminal stage of cytochrome c oxidase synthesis, probably by being involved in the insertion of the copper B into subunit I. In Ehrlichia ruminantium (strain Gardel), this protein is Cytochrome c oxidase assembly protein CtaG.